A 159-amino-acid chain; its full sequence is Protein-export protein SecB (159 aa).

Belongs to the SecB family. Homotetramer, a dimer of dimers. One homotetramer interacts with 1 SecA dimer.

It is found in the cytoplasm. In terms of biological role, one of the proteins required for the normal export of preproteins out of the cell cytoplasm. It is a molecular chaperone that binds to a subset of precursor proteins, maintaining them in a translocation-competent state. It also specifically binds to its receptor SecA. This is Protein-export protein SecB from Marinomonas sp. (strain MWYL1).